We begin with the raw amino-acid sequence, 428 residues long: Aerobic C4-dicarboxylate transport protein (428 aa).

8 helical membrane-spanning segments follow: residues 5-27, 47-64, 77-99, 141-163, 184-206, 219-241, 326-348, and 352-374; these read LFKSLYFQVLTAIAIGILLGHFY, MIIAPVIFCTVVTGIAGM, ALLYFEIVSTIALIIGLIIVNVV, VIGAFASGNILQVLLFAVLFGFA, VIFGIINMIMRLAPIGAFGAMAF, LGQLIICFYITCILFVVLVLGSI, IVHQITLLIVLLLSSKGAAGVTG, and IVLAATLSAVGHLPVAGLALILG.

The protein belongs to the dicarboxylate/amino acid:cation symporter (DAACS) (TC 2.A.23) family.

Its subcellular location is the cell inner membrane. Responsible for the aerobic transport of the dicarboxylates fumarate and malate and to a lesser extent succinate, from the periplasm across the inner membrane. The polypeptide is Aerobic C4-dicarboxylate transport protein (Escherichia coli O157:H7).